A 179-amino-acid chain; its full sequence is Translation initiation factor IF-3 (179 aa).

It belongs to the IF-3 family. As to quaternary structure, monomer.

The protein resides in the cytoplasm. In terms of biological role, IF-3 binds to the 30S ribosomal subunit and shifts the equilibrium between 70S ribosomes and their 50S and 30S subunits in favor of the free subunits, thus enhancing the availability of 30S subunits on which protein synthesis initiation begins. The polypeptide is Translation initiation factor IF-3 (Treponema pallidum (strain Nichols)).